The following is a 506-amino-acid chain: Lysine--tRNA ligase (506 aa).

The Mg(2+) site is built by E415 and E422.

This sequence belongs to the class-II aminoacyl-tRNA synthetase family. As to quaternary structure, homodimer. It depends on Mg(2+) as a cofactor.

It is found in the cytoplasm. The enzyme catalyses tRNA(Lys) + L-lysine + ATP = L-lysyl-tRNA(Lys) + AMP + diphosphate. The polypeptide is Lysine--tRNA ligase (Erwinia tasmaniensis (strain DSM 17950 / CFBP 7177 / CIP 109463 / NCPPB 4357 / Et1/99)).